We begin with the raw amino-acid sequence, 495 residues long: MSYPQFGYPYSSTPQFLMTTNSLSTCCESNGRSLSDSAAAASAQTPVYCPVYESRLLATARHELNSAAALGVYGSPYTSTQGYGNYVTYGADAPSFYSLNAFESKDGTGSAHAGIPQTAAYYPYEHTLSQYQYDRYGTMDGSTRRKNATRETTSTLKAWLQEHRKNPYPTKGEKIMLAIITKMTLTQVSTWFANARRRLKKENKMTWPPRNKCSDEKRPYDEEEEEEEDSQKATIKNEKKTVDEEIHREEKALDLSDLEDFDTIESESSECELKQPFHHQPQDGHQLRQRDCVNDHCKEVILKMPITSTATQELDRTKICHKTGLDQCEQDLLRGRQRGGGESKSCFQQQQILDSKPRIWSLAHTATSLNQTEYPSCMLKHQGLSSPSSSSSSSAVSTPVCVIDRRQDSPVTSLRNWVDGVFHDPLFRHSTLNQALTNTTVSWATTKGTLIDSGSLGRSVGNSTNVIKGQLPNLPHDTNKEFIAFQTSGSKMFCS.

Residues 141 to 203 constitute a DNA-binding region (homeobox; TALE-type); that stretch reads GSTRRKNATR…NARRRLKKEN (63 aa). Residues 203 to 245 are disordered; it reads NKMTWPPRNKCSDEKRPYDEEEEEEEDSQKATIKNEKKTVDEE. Basic and acidic residues predominate over residues 235–245; it reads IKNEKKTVDEE.

Belongs to the TALE/IRO homeobox family.

It localises to the nucleus. In terms of biological role, acts partially redundantly with other irx members in neural patterning. Required for formation of the posterior forebrain, midbrain, hindbrain, and to a lesser extent, spinal cord. Patterns the neuroectoderm in both the anterior/posterior and dorsal/ventral axes. Does not appear to play a role in pronephros kidney development. The polypeptide is Iroquois-class homeodomain protein irx-4-B (irx4-b) (Xenopus laevis (African clawed frog)).